An 862-amino-acid chain; its full sequence is Valine--tRNA ligase (862 aa).

Residues 43–53 (PTVSGALHVGH) carry the 'HIGH' region motif. Residues 459–494 (ERPILPDDAALPVDPSSDTPTGYHDSQRHQPGGFMA) form a disordered region. The 'KMSKS' region signature appears at 574 to 578 (KMSKS). Lys-577 serves as a coordination point for ATP.

It belongs to the class-I aminoacyl-tRNA synthetase family. ValS type 2 subfamily. In terms of assembly, monomer.

The protein localises to the cytoplasm. The enzyme catalyses tRNA(Val) + L-valine + ATP = L-valyl-tRNA(Val) + AMP + diphosphate. In terms of biological role, catalyzes the attachment of valine to tRNA(Val). As ValRS can inadvertently accommodate and process structurally similar amino acids such as threonine, to avoid such errors, it has a 'posttransfer' editing activity that hydrolyzes mischarged Thr-tRNA(Val) in a tRNA-dependent manner. The sequence is that of Valine--tRNA ligase from Salinispora arenicola (strain CNS-205).